The sequence spans 466 residues: Ribulose bisphosphate carboxylase large chain (466 aa).

K5 is modified (N6,N6,N6-trimethyllysine). The substrate site is built by N114 and T164. K166 serves as the catalytic Proton acceptor. K168 serves as a coordination point for substrate. 3 residues coordinate Mg(2+): K192, D194, and E195. At K192 the chain carries N6-carboxylysine. H285 functions as the Proton acceptor in the catalytic mechanism. Positions 286, 318, and 370 each coordinate substrate.

The protein belongs to the RuBisCO large chain family. Type I subfamily. Heterohexadecamer of 8 large chains and 8 small chains; disulfide-linked. The disulfide link is formed within the large subunit homodimers. Mg(2+) serves as cofactor. In terms of processing, the disulfide bond which can form in the large chain dimeric partners within the hexadecamer appears to be associated with oxidative stress and protein turnover.

The protein resides in the plastid. It localises to the chloroplast. It carries out the reaction 2 (2R)-3-phosphoglycerate + 2 H(+) = D-ribulose 1,5-bisphosphate + CO2 + H2O. It catalyses the reaction D-ribulose 1,5-bisphosphate + O2 = 2-phosphoglycolate + (2R)-3-phosphoglycerate + 2 H(+). In terms of biological role, ruBisCO catalyzes two reactions: the carboxylation of D-ribulose 1,5-bisphosphate, the primary event in carbon dioxide fixation, as well as the oxidative fragmentation of the pentose substrate in the photorespiration process. Both reactions occur simultaneously and in competition at the same active site. The chain is Ribulose bisphosphate carboxylase large chain from Caltha palustris (Yellow marsh marigold).